The primary structure comprises 358 residues: Peptide chain release factor 1 (358 aa).

An N5-methylglutamine modification is found at Gln233.

It belongs to the prokaryotic/mitochondrial release factor family. Post-translationally, methylated by PrmC. Methylation increases the termination efficiency of RF1.

The protein resides in the cytoplasm. Functionally, peptide chain release factor 1 directs the termination of translation in response to the peptide chain termination codons UAG and UAA. This is Peptide chain release factor 1 from Clostridium botulinum (strain ATCC 19397 / Type A).